The sequence spans 385 residues: Lipid-A-disaccharide synthase (385 aa).

The protein belongs to the LpxB family.

It catalyses the reaction a lipid X + a UDP-2-N,3-O-bis[(3R)-3-hydroxyacyl]-alpha-D-glucosamine = a lipid A disaccharide + UDP + H(+). It functions in the pathway bacterial outer membrane biogenesis; LPS lipid A biosynthesis. Functionally, condensation of UDP-2,3-diacylglucosamine and 2,3-diacylglucosamine-1-phosphate to form lipid A disaccharide, a precursor of lipid A, a phosphorylated glycolipid that anchors the lipopolysaccharide to the outer membrane of the cell. The chain is Lipid-A-disaccharide synthase from Xylella fastidiosa (strain M23).